Consider the following 197-residue polypeptide: MHQFTTWTGTTVPLMNDNIDTDQLLPKQFLKLIDKKGFGKYLLYAWRYLDDNYTDNPDFILNQPEYQGASILISGDNFGAGSSREHAAWALADYGFKVIIAGSFGDIHYNNDLNNGILPIIQPKEVRDQLAQLGPDQEITVDLADQLIRTPFGECPFDIEQDWKHKLLNGLDDIGITLQYQDLIAEYEDNRPSYWQN.

This sequence belongs to the LeuD family. LeuD type 1 subfamily. As to quaternary structure, heterodimer of LeuC and LeuD.

The enzyme catalyses (2R,3S)-3-isopropylmalate = (2S)-2-isopropylmalate. It functions in the pathway amino-acid biosynthesis; L-leucine biosynthesis; L-leucine from 3-methyl-2-oxobutanoate: step 2/4. Functionally, catalyzes the isomerization between 2-isopropylmalate and 3-isopropylmalate, via the formation of 2-isopropylmaleate. This Streptococcus suis (strain 98HAH33) protein is 3-isopropylmalate dehydratase small subunit.